We begin with the raw amino-acid sequence, 334 residues long: Mitochondrial glycine transporter (334 aa).

Solcar repeat units lie at residues serine 10–alanine 94, leucine 127–arginine 211, and arginine 234–arginine 318. Transmembrane regions (helical) follow at residues phenylalanine 16–glutamine 41, glycine 69–alanine 95, leucine 133–glutamate 158, glycine 186–lysine 209, valine 238–isoleucine 264, and glycine 293–leucine 311.

It belongs to the mitochondrial carrier (TC 2.A.29) family. SLC25A38 subfamily.

The protein localises to the mitochondrion inner membrane. The enzyme catalyses glycine(in) = glycine(out). In terms of biological role, mitochondrial glycine transporter that imports glycine into the mitochondrial matrix. Plays an important role in providing glycine for the first enzymatic step in heme biosynthesis, the condensation of glycine with succinyl-CoA to produce 5-aminolevulinate (ALA) in the mitochondrial matrix. This Pyricularia oryzae (strain 70-15 / ATCC MYA-4617 / FGSC 8958) (Rice blast fungus) protein is Mitochondrial glycine transporter.